The chain runs to 83 residues: MRLFLSLPVLVVVLSIVLEGPAPAQGAPEVSNPFDGLEELGKTLEDNTREFINRITQSELPAKMWDWFSETFRKVKEKLKIDS.

Positions 1–26 (MRLFLSLPVLVVVLSIVLEGPAPAQG) are cleaved as a signal peptide.

It belongs to the apolipoprotein C1 family.

It is found in the secreted. This is Apolipoprotein C-I, acidic form (APOC1A) from Pan paniscus (Pygmy chimpanzee).